The chain runs to 219 residues: Envelope protein US9 homolog (219 aa).

The Intravirion segment spans residues Met1–Thr193. The Di-leucine internalization motif motif lies at Leu145–Leu146. The acidic stretch occupies residues Asp153–Glu168. Phosphoserine; by host CK2 is present on residues Ser163 and Ser165. A helical; Signal-anchor for type II membrane protein transmembrane segment spans residues Val194–Leu214. Residues Ala215 to Pro219 lie on the Virion surface side of the membrane.

It belongs to the alphaherpesvirinae envelope protein US9 family. Post-translationally, phosphorylated on serines within the acidic cluster. Phosphorylation determines whether endocytosed viral US9 traffics to the trans-Golgi network or recycles to the cell membrane.

The protein localises to the virion membrane. It localises to the host Golgi apparatus membrane. The protein resides in the host smooth endoplasmic reticulum membrane. It is found in the host cell membrane. Functionally, essential for the anterograde spread of the infection throughout the host nervous system. Together with the gE/gI heterodimer, US9 is involved in the sorting and transport of viral structural components toward axon tips. This Equine herpesvirus 1 (strain Kentucky A) (EHV-1) protein is Envelope protein US9 homolog.